The sequence spans 944 residues: Putative alpha,alpha-trehalose-phosphate synthase [UDP-forming] 106 kDa subunit (944 aa).

Residues 73-84 show a composition bias toward polar residues; that stretch reads TNAQSNIATPSP. Disordered stretches follow at residues 73–113 and 129–166; these read TNAQ…NSLS and SKND…SELE. Residues 101–113 are compositionally biased toward low complexity; sequence PSSDSPSLENSLS. Phosphoserine occurs at positions 141, 145, 149, 150, 163, and 177. Residues 173–652 are glycosyltransferase; the sequence is SRSLSFSMNG…AVTFQSLIKE (480 aa). T189 is modified (phosphothreonine).

This sequence in the N-terminal section; belongs to the glycosyltransferase 20 family.

The catalysed reaction is D-glucose 6-phosphate + UDP-alpha-D-glucose = alpha,alpha-trehalose 6-phosphate + UDP + H(+). The polypeptide is Putative alpha,alpha-trehalose-phosphate synthase [UDP-forming] 106 kDa subunit (Schizosaccharomyces pombe (strain 972 / ATCC 24843) (Fission yeast)).